The following is a 320-amino-acid chain: MSTAFKMERGVKYRDAAKTSIIQVKNIDPDQELLQKPSWMKIKLPANSAKIQSIKNGMRRHGLNSVCEEASCPNLHECFNHGTATFMILGAICTRRCPFCDVAHGKPLPPDPEEPKKLAETIQDMKLKYVVITSVDRDDLPDRGAGHFAECIKEIRKINPNTQIEILVPDFRGRIEQALDKLKDNPPDVFNHNLENVPRLYRDIRPGADYQWSLKLLREFKALFPHIPTKSGLMVGLGETNEEILNVMQDLRNNGVTMLTLGQYLQPSRFHLPVARYVPPEEFDEFRTKAEVMGFEHAACGPFVRSSYHADLQASGGLVK.

[4Fe-4S] cluster-binding residues include C67, C72, C78, C93, C97, C100, and S307. Residues 79 to 296 (FNHGTATFMI…RTKAEVMGFE (218 aa)) form the Radical SAM core domain.

It belongs to the radical SAM superfamily. Lipoyl synthase family. It depends on [4Fe-4S] cluster as a cofactor.

The protein localises to the cytoplasm. The enzyme catalyses [[Fe-S] cluster scaffold protein carrying a second [4Fe-4S](2+) cluster] + N(6)-octanoyl-L-lysyl-[protein] + 2 oxidized [2Fe-2S]-[ferredoxin] + 2 S-adenosyl-L-methionine + 4 H(+) = [[Fe-S] cluster scaffold protein] + N(6)-[(R)-dihydrolipoyl]-L-lysyl-[protein] + 4 Fe(3+) + 2 hydrogen sulfide + 2 5'-deoxyadenosine + 2 L-methionine + 2 reduced [2Fe-2S]-[ferredoxin]. The protein operates within protein modification; protein lipoylation via endogenous pathway; protein N(6)-(lipoyl)lysine from octanoyl-[acyl-carrier-protein]: step 2/2. Its function is as follows. Catalyzes the radical-mediated insertion of two sulfur atoms into the C-6 and C-8 positions of the octanoyl moiety bound to the lipoyl domains of lipoate-dependent enzymes, thereby converting the octanoylated domains into lipoylated derivatives. This chain is Lipoyl synthase, found in Mannheimia succiniciproducens (strain KCTC 0769BP / MBEL55E).